Here is a 138-residue protein sequence, read N- to C-terminus: Large ribosomal subunit protein uL16 (138 aa).

A compositionally biased stretch (basic residues) spans M1–Q13. The disordered stretch occupies residues M1 to T22.

Belongs to the universal ribosomal protein uL16 family. As to quaternary structure, part of the 50S ribosomal subunit.

Functionally, binds 23S rRNA and is also seen to make contacts with the A and possibly P site tRNAs. The chain is Large ribosomal subunit protein uL16 from Paraburkholderia phymatum (strain DSM 17167 / CIP 108236 / LMG 21445 / STM815) (Burkholderia phymatum).